The chain runs to 355 residues: 3-dehydroquinate synthase (355 aa).

NAD(+) is bound by residues 71-76 (EGEASK), 105-109 (GVVGD), 129-130 (TS), Lys-142, and Lys-151. Zn(2+) contacts are provided by Glu-184, His-246, and His-263.

Belongs to the sugar phosphate cyclases superfamily. Dehydroquinate synthase family. The cofactor is Co(2+). Requires Zn(2+) as cofactor. NAD(+) is required as a cofactor.

The protein resides in the cytoplasm. It carries out the reaction 7-phospho-2-dehydro-3-deoxy-D-arabino-heptonate = 3-dehydroquinate + phosphate. It participates in metabolic intermediate biosynthesis; chorismate biosynthesis; chorismate from D-erythrose 4-phosphate and phosphoenolpyruvate: step 2/7. In terms of biological role, catalyzes the conversion of 3-deoxy-D-arabino-heptulosonate 7-phosphate (DAHP) to dehydroquinate (DHQ). The sequence is that of 3-dehydroquinate synthase from Streptococcus sanguinis (strain SK36).